The sequence spans 165 residues: Shikimate kinase (165 aa).

11 to 16 (GAGKTT) is a binding site for ATP. Thr15 provides a ligand contact to Mg(2+). Substrate is bound by residues Asp33, Arg57, and Gly78. Arg116 is a binding site for ATP. Substrate is bound at residue Arg134.

Belongs to the shikimate kinase family. As to quaternary structure, monomer. The cofactor is Mg(2+).

It is found in the cytoplasm. The catalysed reaction is shikimate + ATP = 3-phosphoshikimate + ADP + H(+). It functions in the pathway metabolic intermediate biosynthesis; chorismate biosynthesis; chorismate from D-erythrose 4-phosphate and phosphoenolpyruvate: step 5/7. Catalyzes the specific phosphorylation of the 3-hydroxyl group of shikimic acid using ATP as a cosubstrate. This chain is Shikimate kinase, found in Bacillus cytotoxicus (strain DSM 22905 / CIP 110041 / 391-98 / NVH 391-98).